The primary structure comprises 162 residues: Succinate dehydrogenase assembly factor 2-A, mitochondrial (162 aa).

Residues 1 to 23 constitute a mitochondrion transit peptide; sequence MLRQLRLTMDISGWIFLPWRRSM.

This sequence belongs to the SDHAF2 family. Interacts with the flavoprotein subunit within the SDH catalytic dimer.

It localises to the mitochondrion matrix. Plays an essential role in the assembly of succinate dehydrogenase (SDH), an enzyme complex (also referred to as respiratory complex II) that is a component of both the tricarboxylic acid (TCA) cycle and the mitochondrial electron transport chain, and which couples the oxidation of succinate to fumarate with the reduction of ubiquinone (coenzyme Q) to ubiquinol. Required for flavinylation (covalent attachment of FAD) of the flavoprotein subunit of the SDH catalytic dimer. In Drosophila erecta (Fruit fly), this protein is Succinate dehydrogenase assembly factor 2-A, mitochondrial.